The chain runs to 1085 residues: Translation factor GUF1 homolog, mitochondrial (1085 aa).

The tr-type G domain occupies 232-409; the sequence is KYIRNFCILA…RIISDIPPPI (178 aa). GTP is bound by residues 241-248, 302-306, and 356-359; these read AHIDSGKS, DTPGH, and NKID.

This sequence belongs to the TRAFAC class translation factor GTPase superfamily. Classic translation factor GTPase family. LepA subfamily.

It localises to the mitochondrion inner membrane. It catalyses the reaction GTP + H2O = GDP + phosphate + H(+). Promotes mitochondrial protein synthesis. May act as a fidelity factor of the translation reaction, by catalyzing a one-codon backward translocation of tRNAs on improperly translocated ribosomes. Binds to mitochondrial ribosomes in a GTP-dependent manner. This chain is Translation factor GUF1 homolog, mitochondrial, found in Plasmodium falciparum (isolate 3D7).